Here is a 58-residue protein sequence, read N- to C-terminus: Photosystem II reaction center X protein (58 aa).

A helical membrane pass occupies residues 27 to 47 (IGSFLAAAAFIVVPAASFLIW).

The protein belongs to the PsbX family. Type 2 subfamily. PSII consists of a core antenna complex that captures photons, and an electron transfer chain that converts photonic excitation into a charge separation. PSII forms dimeric complexes.

The protein resides in the cellular thylakoid membrane. In terms of biological role, involved in the binding and/or turnover of quinones at the Q(B) site of Photosystem II. In Prochlorococcus marinus (strain MIT 9211), this protein is Photosystem II reaction center X protein.